The primary structure comprises 233 residues: Large ribosomal subunit protein uL1 (233 aa).

This sequence belongs to the universal ribosomal protein uL1 family. Part of the 50S ribosomal subunit.

In terms of biological role, binds directly to 23S rRNA. The L1 stalk is quite mobile in the ribosome, and is involved in E site tRNA release. Its function is as follows. Protein L1 is also a translational repressor protein, it controls the translation of the L11 operon by binding to its mRNA. The chain is Large ribosomal subunit protein uL1 from Geobacillus sp. (strain WCH70).